The primary structure comprises 642 residues: Medium-chain-fatty-acid--[acyl-carrier-protein] ligase TtuA (642 aa).

Belongs to the ATP-dependent AMP-binding enzyme family.

It carries out the reaction a medium-chain fatty acid + holo-[ACP] + ATP = a medium-chain fatty acyl-[ACP] + AMP + diphosphate. The catalysed reaction is a medium-chain fatty acid + ATP + H(+) = a medium-chain fatty acyl-AMP + diphosphate. It catalyses the reaction a medium-chain fatty acyl-AMP + holo-[ACP] = a medium-chain fatty acyl-[ACP] + AMP + H(+). The enzyme catalyses decanoate + holo-[ACP] + ATP = decanoyl-[ACP] + AMP + diphosphate. It carries out the reaction decanoate + ATP + H(+) = decanoyl-AMP + diphosphate. The catalysed reaction is decanoyl-AMP + holo-[ACP] = decanoyl-[ACP] + AMP + H(+). In terms of biological role, ligase likely involved in the biosynthesis of a polyyne metabolite. Catalyzes the activation of decanoic acid, followed by the loading of the activated decanoic acid onto the acyl carrier protein TtuC. Decanoic acid is the preferred substrate, but it can also use 10-undecenoic acid and lauric acid. Nonanoic acid and 7-octenoic acid are only weakly activated. This is Medium-chain-fatty-acid--[acyl-carrier-protein] ligase TtuA from Teredinibacter turnerae (strain ATCC 39867 / T7901).